Consider the following 154-residue polypeptide: 6,7-dimethyl-8-ribityllumazine synthase (154 aa).

5-amino-6-(D-ribitylamino)uracil is bound by residues Phe-15, 47–49 (TFD), and 71–73 (AVI). 76–77 (ET) contacts (2S)-2-hydroxy-3-oxobutyl phosphate. His-79 (proton donor) is an active-site residue. Leu-104 serves as a coordination point for 5-amino-6-(D-ribitylamino)uracil. Residue Arg-119 participates in (2S)-2-hydroxy-3-oxobutyl phosphate binding.

This sequence belongs to the DMRL synthase family.

It catalyses the reaction (2S)-2-hydroxy-3-oxobutyl phosphate + 5-amino-6-(D-ribitylamino)uracil = 6,7-dimethyl-8-(1-D-ribityl)lumazine + phosphate + 2 H2O + H(+). It participates in cofactor biosynthesis; riboflavin biosynthesis; riboflavin from 2-hydroxy-3-oxobutyl phosphate and 5-amino-6-(D-ribitylamino)uracil: step 1/2. Its function is as follows. Catalyzes the formation of 6,7-dimethyl-8-ribityllumazine by condensation of 5-amino-6-(D-ribitylamino)uracil with 3,4-dihydroxy-2-butanone 4-phosphate. This is the penultimate step in the biosynthesis of riboflavin. This chain is 6,7-dimethyl-8-ribityllumazine synthase, found in Saccharolobus islandicus (strain L.S.2.15 / Lassen #1) (Sulfolobus islandicus).